The following is a 509-amino-acid chain: Lysine--tRNA ligase (509 aa).

Residues E418 and E425 each coordinate Mg(2+).

Belongs to the class-II aminoacyl-tRNA synthetase family. As to quaternary structure, homodimer. Requires Mg(2+) as cofactor.

It is found in the cytoplasm. The enzyme catalyses tRNA(Lys) + L-lysine + ATP = L-lysyl-tRNA(Lys) + AMP + diphosphate. This Acinetobacter baylyi (strain ATCC 33305 / BD413 / ADP1) protein is Lysine--tRNA ligase (lysS).